We begin with the raw amino-acid sequence, 213 residues long: Uracil phosphoribosyltransferase (213 aa).

5-phospho-alpha-D-ribose 1-diphosphate contacts are provided by residues Arg78, Arg103, and 130–138 (DPMLATGGT). Residues Ile197 and 202 to 204 (GDA) contribute to the uracil site. 5-phospho-alpha-D-ribose 1-diphosphate is bound at residue Asp203.

Belongs to the UPRTase family. Mg(2+) is required as a cofactor.

The catalysed reaction is UMP + diphosphate = 5-phospho-alpha-D-ribose 1-diphosphate + uracil. The protein operates within pyrimidine metabolism; UMP biosynthesis via salvage pathway; UMP from uracil: step 1/1. Its activity is regulated as follows. Allosterically activated by GTP. In terms of biological role, catalyzes the conversion of uracil and 5-phospho-alpha-D-ribose 1-diphosphate (PRPP) to UMP and diphosphate. This Nocardioides sp. (strain ATCC BAA-499 / JS614) protein is Uracil phosphoribosyltransferase.